A 480-amino-acid polypeptide reads, in one-letter code: uncharacterized protein (480 aa).

At Lys222 the chain carries N6-(pyridoxal phosphate)lysine.

Belongs to the Orn/Lys/Arg decarboxylase class-I family. Requires pyridoxal 5'-phosphate as cofactor.

This is an uncharacterized protein from Bacillus subtilis (strain 168).